The primary structure comprises 514 residues: 2-isopropylmalate synthase (514 aa).

Residues 5–268 (LIIFDTTLRD…DVGIDTTQIV (264 aa)) form the Pyruvate carboxyltransferase domain. Residues Asp-14, His-202, His-204, and Asn-239 each contribute to the Mn(2+) site. The regulatory domain stretch occupies residues 395 to 514 (KFVSLSQRSE…KDDKLNPQRA (120 aa)).

Belongs to the alpha-IPM synthase/homocitrate synthase family. LeuA type 1 subfamily. Homodimer. Requires Mn(2+) as cofactor.

The protein localises to the cytoplasm. It catalyses the reaction 3-methyl-2-oxobutanoate + acetyl-CoA + H2O = (2S)-2-isopropylmalate + CoA + H(+). It functions in the pathway amino-acid biosynthesis; L-leucine biosynthesis; L-leucine from 3-methyl-2-oxobutanoate: step 1/4. Catalyzes the condensation of the acetyl group of acetyl-CoA with 3-methyl-2-oxobutanoate (2-ketoisovalerate) to form 3-carboxy-3-hydroxy-4-methylpentanoate (2-isopropylmalate). This chain is 2-isopropylmalate synthase, found in Burkholderia cenocepacia (strain HI2424).